A 193-amino-acid polypeptide reads, in one-letter code: Cysteine and glycine-rich protein 1 (193 aa).

The LIM zinc-binding 1 domain maps to 10–61; that stretch reads CGVCQKTVYFAEEVQCEGNSFHKSCFLCMVCKKNLDSTTVAVHGEEIYCKSC. The Nuclear localization signal signature appears at 64–69; sequence KKYGPK. Serine 81 is subject to Phosphoserine. N6-acetyllysine is present on lysine 84. A Glycyl lysine isopeptide (Lys-Gly) (interchain with G-Cter in SUMO2) cross-link involves residue lysine 91. Lysine 112, lysine 131, lysine 137, and lysine 161 each carry N6-acetyllysine. In terms of domain architecture, LIM zinc-binding 2 spans 119 to 170; it reads CPRCSQAVYAAEKVIGAGKSWHKACFRCAKCGKGLESTTLADKDGEIYCKGC. Serine 192 carries the post-translational modification Phosphoserine.

As to quaternary structure, interacts with ASCC1; ASCC2 and TRIP4.

The protein localises to the nucleus. Could play a role in neuronal development. The chain is Cysteine and glycine-rich protein 1 (CSRP1) from Pongo abelii (Sumatran orangutan).